We begin with the raw amino-acid sequence, 201 residues long: Recombination protein RecR (201 aa).

The C4-type zinc-finger motif lies at 57-72; sequence CECCRTLTEEPLCRIC. The Toprim domain maps to 81-176; sequence GVLCIVETPA…NTTRIAHGVP (96 aa).

The protein belongs to the RecR family.

May play a role in DNA repair. It seems to be involved in an RecBC-independent recombinational process of DNA repair. It may act with RecF and RecO. This chain is Recombination protein RecR, found in Idiomarina loihiensis (strain ATCC BAA-735 / DSM 15497 / L2-TR).